Consider the following 351-residue polypeptide: DNA nickase (351 aa).

3 residues coordinate Fe cation: H241, E245, and H303.

Acts as a DNA nickase. The chain is DNA nickase from Nostoc sp. (strain PCC 7120 / SAG 25.82 / UTEX 2576).